Reading from the N-terminus, the 90-residue chain is Small ribosomal subunit protein bS16 (90 aa).

This sequence belongs to the bacterial ribosomal protein bS16 family.

The polypeptide is Small ribosomal subunit protein bS16 (Lactobacillus gasseri (strain ATCC 33323 / DSM 20243 / BCRC 14619 / CIP 102991 / JCM 1131 / KCTC 3163 / NCIMB 11718 / NCTC 13722 / AM63)).